Consider the following 414-residue polypeptide: UPF0754 membrane protein tlr2287 (414 aa).

The next 2 helical transmembrane spans lie at 2–22 and 386–406; these read ADIS…IGYF and AIVR…AGVL.

The protein belongs to the UPF0754 family.

The protein resides in the cell inner membrane. The protein is UPF0754 membrane protein tlr2287 of Thermosynechococcus vestitus (strain NIES-2133 / IAM M-273 / BP-1).